The sequence spans 346 residues: Dimethyladenosine transferase 1, mitochondrial (346 aa).

The N-terminal 27 residues, Met-1–Leu-27, are a transit peptide targeting the mitochondrion. S-adenosyl-L-methionine is bound by residues Leu-38, Gly-63, Glu-85, Lys-86, Asp-111, Val-112, and Asn-141.

It belongs to the class I-like SAM-binding methyltransferase superfamily. rRNA adenine N(6)-methyltransferase family. KsgA subfamily. Interacts with mitochondrial RNA polymerase POLRMT. Interacts with TFAM. Bound to the maturing mtSSU until the late stages of assembly. In terms of tissue distribution, ubiquitously expressed.

The protein localises to the mitochondrion. It carries out the reaction adenosine(N)/adenosine(N+1) in rRNA + 4 S-adenosyl-L-methionine = N(6)-dimethyladenosine(N)/N(6)-dimethyladenosine(N+1) in rRNA + 4 S-adenosyl-L-homocysteine + 4 H(+). Functionally, mitochondrial methyltransferase which uses S-adenosyl methionine to dimethylate two highly conserved adjacent adenosine residues (A1583 and A1584) within the loop of helix 45 at the 3-prime end of 12S rRNA, thereby regulating the assembly or stability of the small subunit of the mitochondrial ribosome. Also required for basal transcription of mitochondrial DNA, probably via its interaction with POLRMT and TFAM. Stimulates transcription independently of the methyltransferase activity. The polypeptide is Dimethyladenosine transferase 1, mitochondrial (Homo sapiens (Human)).